Reading from the N-terminus, the 249-residue chain is Phosphate import ATP-binding protein PstB 2 (249 aa).

One can recognise an ABC transporter domain in the interval Phe4–Val244. Residue Gly36 to Ser43 participates in ATP binding.

The protein belongs to the ABC transporter superfamily. Phosphate importer (TC 3.A.1.7) family. In terms of assembly, the complex is composed of two ATP-binding proteins (PstB), two transmembrane proteins (PstC and PstA) and a solute-binding protein (PstS).

Its subcellular location is the cell inner membrane. It catalyses the reaction phosphate(out) + ATP + H2O = ADP + 2 phosphate(in) + H(+). Its function is as follows. Part of the ABC transporter complex PstSACB involved in phosphate import. Responsible for energy coupling to the transport system. This chain is Phosphate import ATP-binding protein PstB 2, found in Shewanella oneidensis (strain ATCC 700550 / JCM 31522 / CIP 106686 / LMG 19005 / NCIMB 14063 / MR-1).